Consider the following 643-residue polypeptide: MCGICCSVNFSAEHFSQDLKEDLLYNLKQRGPNSSKQLLKSDVNYQCLFSAHVLHLRGVLTTQPVEDERGNVFLWNGEIFSGIKVEAEENDTQILFNYLSSCKNESEILSLFSEVQGPWSFIYYQASSHYLWFGRDFFGRRSLLWHFSNLGKSFCLSSVGTQTSGLANQWQEVPASGLFRIDLKSTVISGCIILQLYPWKYISRENIIEENVNSLSQISADLPAFVSVVANEAKLYLEKPVVPLNMMLPQAALETHCSNISNVPPTREILQVFLTDVHMKEVIQQFIDVLSVAVKKRVLCLPRDENLTANEVLKTCDRKANVAILFSGGIDSMVIATLADRHIPLDEPIDLLNVAFIAEEKTMPTTFNREGNKQKNKCEIPSEEFSKDVAAAAADSPNKHVSVPDRITGRAGLKELQAVSPSRIWNFVEINVSMEELQKLRRTRICHLIRPLDTVLDDSIGCAVWFASRGIGWLVAQEGVKSYQSNAKVVLTGIGADEQLAGYSRHRVRFQSHGLEGLNKEIMMELGRISSRNLGRDDRVIGDHGKEARFPFLDENVVSFLNSLPIWEKANLTLPRGIGEKLLLRLAAVELGLTASALLPKRAMQFGSRIAKMEKINEKASDKCGRLQIMSLENLSIEKETKL.

The active-site For GATase activity is cysteine 2. One can recognise a Glutamine amidotransferase type-2 domain in the interval 2–184; sequence CGICCSVNFS…ASGLFRIDLK (183 aa). Residues 285–601 form the Asparagine synthetase domain; it reads QFIDVLSVAV…GLTASALLPK (317 aa).

The polypeptide is Asparagine synthetase domain-containing protein 1 (ASNSD1) (Homo sapiens (Human)).